The sequence spans 476 residues: Adenosylhomocysteinase (476 aa).

Residues threonine 67, aspartate 142, and glutamate 202 each contribute to the substrate site. Residue 203–205 coordinates NAD(+); sequence TTT. Positions 232 and 236 each coordinate substrate. Residues asparagine 237, 266–271, glutamate 289, asparagine 324, 345–347, and asparagine 390 each bind NAD(+); these read GYGDVG and IGH.

Belongs to the adenosylhomocysteinase family. NAD(+) serves as cofactor.

It localises to the cytoplasm. The catalysed reaction is S-adenosyl-L-homocysteine + H2O = L-homocysteine + adenosine. Its pathway is amino-acid biosynthesis; L-homocysteine biosynthesis; L-homocysteine from S-adenosyl-L-homocysteine: step 1/1. Functionally, may play a key role in the regulation of the intracellular concentration of adenosylhomocysteine. The protein is Adenosylhomocysteinase of Parasynechococcus marenigrum (strain WH8102).